Reading from the N-terminus, the 151-residue chain is MEIGNKVMEMKNDISKWKLIKTLYKVLKLKCWYDDENYAWSGGLSAYADGLRLLSKVGLFKIESEYCRSVTGKFKELKASAVNLNAVDEDELIETLYRVLRQSCIMNIDDNIGESFGKKVYASGLRLLSKLGLFEIESEQGDYIIGKFKEI.

This is an uncharacterized protein from Methanocaldococcus jannaschii (strain ATCC 43067 / DSM 2661 / JAL-1 / JCM 10045 / NBRC 100440) (Methanococcus jannaschii).